Here is a 942-residue protein sequence, read N- to C-terminus: Protein inturned (942 aa).

The segment covering 1–13 has biased composition (basic and acidic residues); it reads MADPARRDPRGRA. 2 disordered regions span residues 1–54 and 129–150; these read MADP…LEPE and PKRHHKKKSSNTGPVSILKHQS. The segment covering 22 to 32 has biased composition (acidic residues); sequence SQEEEEEESDS. Over residues 33 to 48 the composition is skewed to low complexity; that stretch reads DAGASSLGSCSSASSD. A compositionally biased stretch (polar residues) spans 138-150; the sequence is SNTGPVSILKHQS. The region spanning 189 to 267 is the PDZ domain; the sequence is LVGVIHQTKW…PMQVKLTFEN (79 aa). S674 and S678 each carry phosphoserine. The segment at 707–752 is disordered; sequence KARKPSPSRIGGGREPGEGEENVGLSPHTTPDTVRKQRESEGSDDN.

This sequence belongs to the inturned family. In terms of assembly, component of the CPLANE (ciliogenesis and planar polarity effectors) complex, composed of INTU, FUZ and WDPCP. Interacts with CPLANE1. Interacts with NPHP4 and DAAM1; INTU is mediating the interaction between NPHP4 and DAAM1.

The protein localises to the cytoplasm. The protein resides in the cell surface. Its subcellular location is the cytoskeleton. It is found in the cilium basal body. It localises to the microtubule organizing center. The protein localises to the centrosome. The protein resides in the centriole. In terms of biological role, plays a key role in ciliogenesis and embryonic development. Regulator of cilia formation by controlling the organization of the apical actin cytoskeleton and the positioning of the basal bodies at the apical cell surface, which in turn is essential for the normal orientation of elongating ciliary microtubules. Plays a key role in definition of cell polarity via its role in ciliogenesis but not via conversion extension. Has an indirect effect on hedgehog signaling. Proposed to function as core component of the CPLANE (ciliogenesis and planar polarity effectors) complex involved in the recruitment of peripheral IFT-A proteins to basal bodies. Required for recruitment of CPLANE2 to the mother centriole. Binds phosphatidylinositol 3-phosphate with highest affinity, followed by phosphatidylinositol 4-phosphate and phosphatidylinositol 5-phosphate. The chain is Protein inturned (Intu) from Rattus norvegicus (Rat).